The chain runs to 205 residues: Thymidylate kinase (205 aa).

10-17 lines the ATP pocket; it reads GIDGAGKT.

This sequence belongs to the thymidylate kinase family.

The catalysed reaction is dTMP + ATP = dTDP + ADP. Phosphorylation of dTMP to form dTDP in both de novo and salvage pathways of dTTP synthesis. This is Thymidylate kinase from Nitrosospira multiformis (strain ATCC 25196 / NCIMB 11849 / C 71).